Reading from the N-terminus, the 240-residue chain is Putative S-adenosylmethionine-dependent methyltransferase RcsF (240 aa).

A TsaA-like domain is found at 5–142; that stretch reads ISPIGHVRSC…YVPYADIVPD (138 aa). Residues 22-24, 63-64, arginine 91, and 122-125 contribute to the S-adenosyl-L-methionine site; these read PRQ, HQ, and LDGT.

Belongs to the tRNA methyltransferase O family.

This chain is Putative S-adenosylmethionine-dependent methyltransferase RcsF (rcsF), found in Pseudomonas aeruginosa.